The chain runs to 159 residues: Ribonuclease H (159 aa).

Residues Thr-10–Glu-153 enclose the RNase H type-1 domain. Residues Asp-19, Glu-57, Asp-79, and Asp-145 each contribute to the Mg(2+) site.

Belongs to the RNase H family. In terms of assembly, monomer. The cofactor is Mg(2+).

The protein localises to the cytoplasm. The enzyme catalyses Endonucleolytic cleavage to 5'-phosphomonoester.. Its function is as follows. Endonuclease that specifically degrades the RNA of RNA-DNA hybrids. The chain is Ribonuclease H from Polaromonas sp. (strain JS666 / ATCC BAA-500).